A 592-amino-acid polypeptide reads, in one-letter code: Probable 6-phosphofructo-2-kinase C222.13c (592 aa).

Positions 1–80 (MSNTGSARTE…PANDVEKMEV (80 aa)) are disordered. Residues 57–66 (SIFKREELTP) are compositionally biased toward basic and acidic residues. Position 150 to 157 (150 to 157 (GIPATGKS)) interacts with ATP. Catalysis depends on residues D235 and C266. R300 provides a ligand contact to beta-D-fructose 6-phosphate. The Proton donor role is filled by H527.

It localises to the cytoplasm. It is found in the nucleus. The enzyme catalyses beta-D-fructose 6-phosphate + ATP = beta-D-fructose 2,6-bisphosphate + ADP + H(+). Synthesis of fructose 2,6-bisphosphate. In Schizosaccharomyces pombe (strain 972 / ATCC 24843) (Fission yeast), this protein is Probable 6-phosphofructo-2-kinase C222.13c.